Consider the following 492-residue polypeptide: Cytochrome P450 2A12 (492 aa).

Cys-437 contacts heme.

It belongs to the cytochrome P450 family. Heme is required as a cofactor. As to expression, liver.

The protein resides in the endoplasmic reticulum membrane. It is found in the microsome membrane. It carries out the reaction an organic molecule + reduced [NADPH--hemoprotein reductase] + O2 = an alcohol + oxidized [NADPH--hemoprotein reductase] + H2O + H(+). Functionally, highly active in the 7-alpha-hydroxylation of testosterone. The polypeptide is Cytochrome P450 2A12 (Cyp2a12) (Mus musculus (Mouse)).